Consider the following 88-residue polypeptide: Probable Fe(2+)-trafficking protein (88 aa).

Belongs to the Fe(2+)-trafficking protein family.

Functionally, could be a mediator in iron transactions between iron acquisition and iron-requiring processes, such as synthesis and/or repair of Fe-S clusters in biosynthetic enzymes. This Neisseria gonorrhoeae (strain ATCC 700825 / FA 1090) protein is Probable Fe(2+)-trafficking protein.